Reading from the N-terminus, the 1369-residue chain is MutS protein homolog 5 (1369 aa).

Positions 138-190 (IYEDGTTEEGTSEDTVPTWDSSLAYSTDETTAEKEEKEEDEDDDDEGLPAKLN) are disordered. A compositionally biased stretch (acidic residues) spans 173 to 184 (EKEEDEDDDDEG). 639–646 (GPNACGKS) provides a ligand contact to ATP. 4 disordered regions span residues 880 to 915 (SMRN…SVLS), 935 to 1135 (KKKK…RSSN), 1153 to 1182 (LKSQ…HSQN), and 1248 to 1278 (NFIF…SSIS). The segment covering 884-894 (VSEEIEKERSE) has biased composition (basic and acidic residues). 2 stretches are compositionally biased toward polar residues: residues 895 to 915 (ASTP…SVLS) and 941 to 950 (TGSSMESSMS). The span at 954-967 (FQEEDEGTEGEEDQ) shows a compositional bias: acidic residues. Positions 991 to 1003 (QSINSRHSFSTRT) are enriched in polar residues. A compositionally biased stretch (low complexity) spans 1024–1037 (STSTSSPGPSASKS). Residues 1049–1065 (VKESQVLETPKQLSISS) are compositionally biased toward polar residues. Residues 1073 to 1084 (SSEKDVISRVSE) are compositionally biased toward basic and acidic residues. 2 stretches are compositionally biased toward polar residues: residues 1111–1124 (KNRS…QSAR) and 1153–1167 (LKSQ…TPRS). The segment covering 1254–1263 (PEPRSSEKQR) has biased composition (basic and acidic residues).

This sequence belongs to the DNA mismatch repair MutS family. Heterooligomer of him-14 and msh-5. Interacts with the brc-1-brd-1 heterodimer. Expressed in the germline.

Its subcellular location is the chromosome. Functionally, crucial component in meiotic recombination, functioning at some point after the initiation step of recombination. Plays a role in promoting the crossover outcome of meiotic recombination events. Required for formation of normal meiotic crossover, and crossover and chiasmata generated by artificially made DNA breaks. Together with him-14 and zhp-3 plays a role in the activation of DNA damage-dependent apoptosis at the DNA damage checkpoint in pachytene cells. This is MutS protein homolog 5 from Caenorhabditis elegans.